Consider the following 102-residue polypeptide: Small ribosomal subunit protein uS10 (102 aa).

It belongs to the universal ribosomal protein uS10 family. Part of the 30S ribosomal subunit.

Functionally, involved in the binding of tRNA to the ribosomes. In Staphylococcus haemolyticus (strain JCSC1435), this protein is Small ribosomal subunit protein uS10.